Consider the following 382-residue polypeptide: Queuine tRNA-ribosyltransferase (382 aa).

Asp93 serves as the catalytic Proton acceptor. Residues 93–97 (DSGGF), Asp147, Gln191, and Gly218 each bind substrate. The RNA binding stretch occupies residues 249 to 255 (GVGKPED). Catalysis depends on Asp268, which acts as the Nucleophile. Residues 273–277 (TRNAR) form an RNA binding; important for wobble base 34 recognition region. Zn(2+)-binding residues include Cys306, Cys308, Cys311, and His337.

Belongs to the queuine tRNA-ribosyltransferase family. In terms of assembly, homodimer. Within each dimer, one monomer is responsible for RNA recognition and catalysis, while the other monomer binds to the replacement base PreQ1. The cofactor is Zn(2+).

It catalyses the reaction 7-aminomethyl-7-carbaguanine + guanosine(34) in tRNA = 7-aminomethyl-7-carbaguanosine(34) in tRNA + guanine. It functions in the pathway tRNA modification; tRNA-queuosine biosynthesis. Its function is as follows. Catalyzes the base-exchange of a guanine (G) residue with the queuine precursor 7-aminomethyl-7-deazaguanine (PreQ1) at position 34 (anticodon wobble position) in tRNAs with GU(N) anticodons (tRNA-Asp, -Asn, -His and -Tyr). Catalysis occurs through a double-displacement mechanism. The nucleophile active site attacks the C1' of nucleotide 34 to detach the guanine base from the RNA, forming a covalent enzyme-RNA intermediate. The proton acceptor active site deprotonates the incoming PreQ1, allowing a nucleophilic attack on the C1' of the ribose to form the product. After dissociation, two additional enzymatic reactions on the tRNA convert PreQ1 to queuine (Q), resulting in the hypermodified nucleoside queuosine (7-(((4,5-cis-dihydroxy-2-cyclopenten-1-yl)amino)methyl)-7-deazaguanosine). In Haemophilus influenzae (strain 86-028NP), this protein is Queuine tRNA-ribosyltransferase.